A 371-amino-acid chain; its full sequence is Bifunctional enzyme IspD/IspF (371 aa).

The 2-C-methyl-D-erythritol 4-phosphate cytidylyltransferase stretch occupies residues 1–210; sequence MSEISLIMLA…LDLPKPSFEI (210 aa). The 2-C-methyl-D-erythritol 2,4-cyclodiphosphate synthase stretch occupies residues 211 to 371; sequence FTGNGFDVHE…NLKYFDWTRL (161 aa). Positions 217 and 219 each coordinate a divalent metal cation. Residues 217 to 219 and 243 to 244 contribute to the 4-CDP-2-C-methyl-D-erythritol 2-phosphate site; these read DVH and HS. A divalent metal cation is bound at residue His251. 4-CDP-2-C-methyl-D-erythritol 2-phosphate contacts are provided by residues 265 to 267, 270 to 274, 341 to 344, Phe348, and Arg351; these read DIG, YPDTD, and TTTE.

This sequence in the N-terminal section; belongs to the IspD/TarI cytidylyltransferase family. IspD subfamily. The protein in the C-terminal section; belongs to the IspF family. A divalent metal cation serves as cofactor.

It carries out the reaction 2-C-methyl-D-erythritol 4-phosphate + CTP + H(+) = 4-CDP-2-C-methyl-D-erythritol + diphosphate. The catalysed reaction is 4-CDP-2-C-methyl-D-erythritol 2-phosphate = 2-C-methyl-D-erythritol 2,4-cyclic diphosphate + CMP. It functions in the pathway isoprenoid biosynthesis; isopentenyl diphosphate biosynthesis via DXP pathway; isopentenyl diphosphate from 1-deoxy-D-xylulose 5-phosphate: step 2/6. Its pathway is isoprenoid biosynthesis; isopentenyl diphosphate biosynthesis via DXP pathway; isopentenyl diphosphate from 1-deoxy-D-xylulose 5-phosphate: step 4/6. In terms of biological role, bifunctional enzyme that catalyzes the formation of 4-diphosphocytidyl-2-C-methyl-D-erythritol from CTP and 2-C-methyl-D-erythritol 4-phosphate (MEP) (IspD), and catalyzes the conversion of 4-diphosphocytidyl-2-C-methyl-D-erythritol 2-phosphate (CDP-ME2P) to 2-C-methyl-D-erythritol 2,4-cyclodiphosphate (ME-CPP) with a corresponding release of cytidine 5-monophosphate (CMP) (IspF). The sequence is that of Bifunctional enzyme IspD/IspF from Campylobacter jejuni subsp. doylei (strain ATCC BAA-1458 / RM4099 / 269.97).